Here is a 303-residue protein sequence, read N- to C-terminus: Tyrosine recombinase XerC (303 aa).

One can recognise a Core-binding (CB) domain in the interval 3 to 89 (IQNDQWVSAF…TLRSFYQFLV (87 aa)). Positions 110-297 (KLPSFLYEEE…TKDRLRDVYR (188 aa)) constitute a Tyr recombinase domain. Active-site residues include Arg-150, Lys-174, His-249, Arg-252, and His-275. Residue Tyr-284 is the O-(3'-phospho-DNA)-tyrosine intermediate of the active site.

Belongs to the 'phage' integrase family. XerC subfamily. Forms a cyclic heterotetrameric complex composed of two molecules of XerC and two molecules of XerD.

It localises to the cytoplasm. Site-specific tyrosine recombinase, which acts by catalyzing the cutting and rejoining of the recombining DNA molecules. The XerC-XerD complex is essential to convert dimers of the bacterial chromosome into monomers to permit their segregation at cell division. It also contributes to the segregational stability of plasmids. This is Tyrosine recombinase XerC from Halalkalibacterium halodurans (strain ATCC BAA-125 / DSM 18197 / FERM 7344 / JCM 9153 / C-125) (Bacillus halodurans).